The chain runs to 891 residues: Major core protein 4a precursor (891 aa).

This sequence belongs to the poxviridae protein P4a family. In terms of assembly, interacts with P39/A4.

The protein resides in the virion. Core protein 4a is the most abundant virion protein. Major component of the virion core that undergoes proteolytic processing during the immature virion (IV) to mature virion (MV) transition. This Fowlpox virus (strain NVSL) (FPV) protein is Major core protein 4a precursor.